The sequence spans 212 residues: RING-H2 finger protein ATL68 (212 aa).

The helical transmembrane segment at 24 to 44 threads the bilayer; that stretch reads LGLGYSIAIALGFLVLISTII. The segment at 136-178 adopts an RING-type; atypical zinc-finger fold; it reads CSICLCEYMEEEMLRMMPECKHYFHVYCLDAWLKLNGSCPVCR. The segment at 182-212 is disordered; that stretch reads LPTPQSTPQSTPLSEVVPLSQYAADRRRSRR. Residues 185-195 are compositionally biased toward low complexity; it reads PQSTPQSTPLS.

The protein belongs to the RING-type zinc finger family. ATL subfamily.

It is found in the membrane. The enzyme catalyses S-ubiquitinyl-[E2 ubiquitin-conjugating enzyme]-L-cysteine + [acceptor protein]-L-lysine = [E2 ubiquitin-conjugating enzyme]-L-cysteine + N(6)-ubiquitinyl-[acceptor protein]-L-lysine.. Its pathway is protein modification; protein ubiquitination. The sequence is that of RING-H2 finger protein ATL68 (ATL68) from Arabidopsis thaliana (Mouse-ear cress).